The chain runs to 361 residues: dTDP-glucose 4,6-dehydratase (361 aa).

Residues 11 to 12 (FI), 32 to 35 (DKLT), 58 to 59 (DI), 80 to 84 (LAAES), and Thr-99 each bind NAD(+). Ser-84 is a substrate binding site. Thr-133 serves as a coordination point for substrate. Asp-134 serves as the catalytic Proton donor. Residues Glu-135 and Tyr-167 each act as proton acceptor in the active site. Residue 167–171 (YSASK) participates in NAD(+) binding. Residue Asn-196 participates in substrate binding. Asn-197 is an NAD(+) binding site. Substrate contacts are provided by residues 206 to 207 (KL), 222 to 224 (PIY), Arg-231, Asn-266, and 296 to 300 (DRPGH).

This sequence belongs to the NAD(P)-dependent epimerase/dehydratase family. dTDP-glucose dehydratase subfamily. As to quaternary structure, homodimer. NAD(+) is required as a cofactor.

The enzyme catalyses dTDP-alpha-D-glucose = dTDP-4-dehydro-6-deoxy-alpha-D-glucose + H2O. It participates in carbohydrate biosynthesis; dTDP-L-rhamnose biosynthesis. It functions in the pathway bacterial outer membrane biogenesis; LPS O-antigen biosynthesis. Catalyzes the dehydration of dTDP-D-glucose to form dTDP-6-deoxy-D-xylo-4-hexulose via a three-step process involving oxidation, dehydration and reduction. This chain is dTDP-glucose 4,6-dehydratase (rfbB), found in Shigella flexneri.